Reading from the N-terminus, the 648-residue chain is Pumilio homolog 3 (648 aa).

The tract at residues 1–124 (MEVKGKKQFT…KKKKELKQSR (124 aa)) is disordered. The span at 17–27 (AQEKNRFHKNS) shows a compositional bias: basic and acidic residues. Residue lysine 33 is modified to N6-acetyllysine. The span at 60 to 69 (LGKKGVKQFK) shows a compositional bias: basic residues. Basic and acidic residues predominate over residues 94-124 (FQPDGRSDESAAKKPKWDDFKKKKKELKQSR). A Nuclear localization signal motif is present at residues 106-118 (KKPKWDDFKKKKK). One can recognise a PUM-HD domain in the interval 143-510 (EILRRKDCDK…VVLDKSACVL (368 aa)). Pumilio repeat units follow at residues 177–212 (HDST…LSKA), 213–248 (KYSR…MLRH), 249–277 (AEAS…ELYG), 289–325 (RTLD…VIKH), 326–361 (SLVH…LAHT), 362–397 (HDGA…VANG), 398–435 (QYSH…IVND), 436–504 (KYGR…VVLD), 505–551 (KSAC…IAEH), 552–596 (PAGH…WASV), and 597–636 (NRGA…KSTS). The HA-8 stretch occupies residues 289–297 (RTLDKVLEV).

As to quaternary structure, interacts with PARP1 (via catalytic domain). Widely expressed.

Its subcellular location is the nucleus. The protein resides in the nucleolus. It is found in the nucleoplasm. It localises to the chromosome. In terms of biological role, inhibits the poly(ADP-ribosyl)ation activity of PARP1 and the degradation of PARP1 by CASP3 following genotoxic stress. Binds to double-stranded RNA or DNA without sequence specificity. Involved in development of the eye and of primordial germ cells. This Homo sapiens (Human) protein is Pumilio homolog 3.